A 358-amino-acid chain; its full sequence is Alternative oxidase, mitochondrial (358 aa).

A helical transmembrane segment spans residues 152-172; the sequence is LIRMVFLESVAGVPGMVAGML. Residues Glu-159, Glu-198, and His-201 each contribute to the Fe cation site. Residues 217-237 form a helical membrane-spanning segment; the sequence is FMIIGAQGVFFNSMFLSYLIS. Fe cation-binding residues include Glu-249, Glu-250, Glu-306, and His-309.

Belongs to the alternative oxidase family. Fe cation serves as cofactor.

Its subcellular location is the mitochondrion inner membrane. In terms of biological role, catalyzes cyanide-resistant oxygen consumption. May increase respiration when the cytochrome respiratory pathway is restricted, or in response to low temperatures. This Blumeria graminis (Powdery mildew) protein is Alternative oxidase, mitochondrial.